The sequence spans 879 residues: MKVYGVNELRKMYLDFFESKGHLKLNSFSLVPQNDKSLLLINSGMAPLKPYFTGQEIPPKKRVTTCQKCIRTGDIENIGKTARHGTFFEMLGNFSFGDYFKHEAIAWSWEFLTEVVGLSGDRLYPSIYLEDDEAFDIWNKEVGIAPERIFRMGKADNFWEHGAGPCGPCSEIYYDRGEKYGCGDPNCTVGCECDRFIEVWNNVFTQFNSDGNGNYEELENKNIDTGMGLERLAVVVQDVDTLFDIDTMKAIRDHVCKMANAEYKVDPKKDMSIRLITDHIRSVTFMTSDGIIPSNEGRGYVLRRLLRRAARHGRLLGIQGKFLAELSKTVIAESKDGYPELEEKKEYILKVLTIEEEKFNKTIDQGLSILSEMEEALVSNGTKTLNGEDAFKLYDTYGFPLDLTKEILEEKGFSIDEEGFKKAMQVQRETARSARAVTNYMGADASIYDEIDPAITSNFVGYDRTSHTSKISVLTTETDLTDEVVGGQTATIIVDETPFYATMGGQTADIGFIVGKDAEFEVEDTIKLKGGRVGHLGTVTKGSFKVGETVTLTIDTQKRQAIGKNHSATHLLQKALRNVLGSHVEQAGSFVTSERLRFDFTHFSALTKEEIAKVEAMVNEEIAKNVPVVTDVMSVEDAKKSGAMALFGEKYGDSVRVVTMGDFSKELCGGTHVANTGSITVFKILSEAGIAAGVRRIEAITSNAVFEYYKSMEEELHEAAKVAKTEPASLVKRIESLQEELKTALSENEKLKAKLANNSLGDVMNQVVEVKGVKLLASKVTDADMNGLRNLGDQLKEKLGECVILLASASEDKVNLIAMATDGAMAKGAHAGNLIKEVAVLVGGGGGGRPNMAQAGGKNPSGIDAAIEKAVSVVENQIK.

4 residues coordinate Zn(2+): histidine 566, histidine 570, cysteine 668, and histidine 672.

Belongs to the class-II aminoacyl-tRNA synthetase family. The cofactor is Zn(2+).

It is found in the cytoplasm. The catalysed reaction is tRNA(Ala) + L-alanine + ATP = L-alanyl-tRNA(Ala) + AMP + diphosphate. Its function is as follows. Catalyzes the attachment of alanine to tRNA(Ala) in a two-step reaction: alanine is first activated by ATP to form Ala-AMP and then transferred to the acceptor end of tRNA(Ala). Also edits incorrectly charged Ser-tRNA(Ala) and Gly-tRNA(Ala) via its editing domain. The polypeptide is Alanine--tRNA ligase 1 (Lachnoclostridium phytofermentans (strain ATCC 700394 / DSM 18823 / ISDg) (Clostridium phytofermentans)).